A 644-amino-acid polypeptide reads, in one-letter code: Archaeal Lon protease (644 aa).

The span at 1–18 (MKTTIKNSRTQESVSYEG) shows a compositional bias: polar residues. A disordered region spans residues 1-30 (MKTTIKNSRTQESVSYEGNETKKGTGETLS). Topologically, residues 1–137 (MKTTIKNSRT…KARSQDEKKN (137 aa)) are cytoplasmic. 71–78 (GEPGVGKS) provides a ligand contact to ATP. The next 2 helical transmembrane spans lie at 138 to 155 (LFMMLIISFILVLGFMMN) and 156 to 171 (QFLAAIIAAGIIFLAL). The Cytoplasmic segment spans residues 172–644 (QQFRPRTTVM…PSIMKKPAMH (473 aa)). Positions 438–617 (GGEVGRVNGL…GDVLEHALIG (180 aa)) constitute a Lon proteolytic domain. Active-site residues include S524 and K567.

Belongs to the peptidase S16 family. Archaeal LonB subfamily. As to quaternary structure, homohexamer. Organized in a ring with a central cavity.

It is found in the cell membrane. In terms of biological role, ATP-dependent serine protease that mediates the selective degradation of mutant and abnormal proteins as well as certain short-lived regulatory proteins. Degrades polypeptides processively. The sequence is that of Archaeal Lon protease from Methanothermobacter thermautotrophicus (strain ATCC 29096 / DSM 1053 / JCM 10044 / NBRC 100330 / Delta H) (Methanobacterium thermoautotrophicum).